Here is a 319-residue protein sequence, read N- to C-terminus: HTH-type transcriptional regulator YidZ (319 aa).

Residues 8–65 (LDLNLLLCLQLLMQERSVTKAAKRINVTPSAVSKSLAKLRAWFDDPLFVNSPLGLSPT) form the HTH lysR-type domain. A DNA-binding region (H-T-H motif) is located at residues 25–44 (VTKAAKRINVTPSAVSKSLA).

The protein belongs to the LysR transcriptional regulatory family.

Functionally, involved in anaerobic NO protection. This is HTH-type transcriptional regulator YidZ from Escherichia coli (strain K12 / MC4100 / BW2952).